Consider the following 1197-residue polypeptide: DNA-directed RNA polymerase subunit beta (1197 aa).

Belongs to the RNA polymerase beta chain family. The RNAP catalytic core consists of 2 alpha, 1 beta, 1 beta' and 1 omega subunit. When a sigma factor is associated with the core the holoenzyme is formed, which can initiate transcription.

The enzyme catalyses RNA(n) + a ribonucleoside 5'-triphosphate = RNA(n+1) + diphosphate. Functionally, DNA-dependent RNA polymerase catalyzes the transcription of DNA into RNA using the four ribonucleoside triphosphates as substrates. The chain is DNA-directed RNA polymerase subunit beta from Streptococcus pyogenes serotype M12 (strain MGAS9429).